A 1036-amino-acid polypeptide reads, in one-letter code: Chitin synthase 1 (1036 aa).

Residues methionine 1–valine 10 are compositionally biased toward pro residues. The disordered stretch occupies residues methionine 1 to phenylalanine 153. A glycan (N-linked (GlcNAc...) asparagine) is linked at asparagine 38. The segment covering proline 86–serine 108 has biased composition (low complexity). N-linked (GlcNAc...) asparagine glycosylation occurs at asparagine 179. A disordered region spans residues arginine 189–arginine 229. Residues serine 194–threonine 203 show a composition bias toward polar residues. The next 7 membrane-spanning stretches (helical) occupy residues phenylalanine 659–valine 679, isoleucine 699–leucine 719, threonine 733–isoleucine 753, isoleucine 776–phenylalanine 796, serine 808–cysteine 828, tyrosine 908–tyrosine 928, and tryptophan 945–valine 967. The disordered stretch occupies residues alanine 994–leucine 1019. A compositionally biased stretch (low complexity) spans serine 1001–leucine 1019.

Belongs to the chitin synthase family. Class II subfamily.

It is found in the cell membrane. It carries out the reaction [(1-&gt;4)-N-acetyl-beta-D-glucosaminyl](n) + UDP-N-acetyl-alpha-D-glucosamine = [(1-&gt;4)-N-acetyl-beta-D-glucosaminyl](n+1) + UDP + H(+). Its function is as follows. Polymerizes chitin, a structural polymer of the cell wall and septum, by transferring the sugar moiety of UDP-GlcNAc to the non-reducing end of the growing chitin polymer. CHS1 mainly responsible for normal yeast cell reproductive growth. This is Chitin synthase 1 from Exophiala dermatitidis (strain ATCC 34100 / CBS 525.76 / NIH/UT8656) (Black yeast).